The primary structure comprises 72 residues: Disintegrin cereberin (72 aa).

The Disintegrin domain occupies 1-72; it reads EAGEECDCGS…SADCPRNRFH (72 aa). Intrachain disulfides connect cysteine 6–cysteine 21, cysteine 8–cysteine 16, cysteine 15–cysteine 38, cysteine 29–cysteine 35, cysteine 34–cysteine 59, and cysteine 47–cysteine 66. Positions 51 to 53 match the Cell attachment site motif; sequence RGD. Residues 51–72 form a disordered region; sequence RGDNPDDRCTGQSADCPRNRFH.

This sequence belongs to the venom metalloproteinase (M12B) family. P-II subfamily. P-IIa sub-subfamily. As to quaternary structure, monomer (disintegrin). In terms of tissue distribution, expressed by the venom gland.

Its subcellular location is the secreted. Functionally, inhibits fibrinogen interaction with platelet. Acts by binding to alpha-IIb/beta-3 (ITGA2B/ITGB3) on the platelet surface and inhibits aggregation induced by ADP, thrombin, platelet-activating factor and collagen. In Crotalus cerberus (Arizona black rattlesnake), this protein is Disintegrin cereberin.